The sequence spans 144 residues: Large ribosomal subunit protein uL15 (144 aa).

Positions methionine 1–glycine 49 are disordered. The span at arginine 21–alanine 31 shows a compositional bias: gly residues.

This sequence belongs to the universal ribosomal protein uL15 family. In terms of assembly, part of the 50S ribosomal subunit.

Binds to the 23S rRNA. This Shewanella piezotolerans (strain WP3 / JCM 13877) protein is Large ribosomal subunit protein uL15.